We begin with the raw amino-acid sequence, 128 residues long: Large ribosomal subunit protein bL12 (128 aa).

It belongs to the bacterial ribosomal protein bL12 family. As to quaternary structure, homodimer. Part of the ribosomal stalk of the 50S ribosomal subunit. Forms a multimeric L10(L12)X complex, where L10 forms an elongated spine to which 2 to 4 L12 dimers bind in a sequential fashion. Binds GTP-bound translation factors.

In terms of biological role, forms part of the ribosomal stalk which helps the ribosome interact with GTP-bound translation factors. Is thus essential for accurate translation. The sequence is that of Large ribosomal subunit protein bL12 from Corynebacterium efficiens (strain DSM 44549 / YS-314 / AJ 12310 / JCM 11189 / NBRC 100395).